We begin with the raw amino-acid sequence, 389 residues long: GTPase Obg (389 aa).

The Obg domain occupies 1–159 (MKFVDEAVIR…RSLKLELLLL (159 aa)). The region spanning 160–333 (ADVGLLGMPN…LALKLLDYIA (174 aa)) is the OBG-type G domain. Residues 166–173 (GMPNAGKS), 191–195 (FTTLV), 213–216 (DIPG), 283–286 (NKTD), and 314–316 (SAY) each bind GTP. The Mg(2+) site is built by S173 and T193.

The protein belongs to the TRAFAC class OBG-HflX-like GTPase superfamily. OBG GTPase family. Monomer. The cofactor is Mg(2+).

The protein resides in the cytoplasm. An essential GTPase which binds GTP, GDP and possibly (p)ppGpp with moderate affinity, with high nucleotide exchange rates and a fairly low GTP hydrolysis rate. Plays a role in control of the cell cycle, stress response, ribosome biogenesis and in those bacteria that undergo differentiation, in morphogenesis control. In Shewanella baltica (strain OS223), this protein is GTPase Obg.